Consider the following 125-residue polypeptide: Inner membrane protein YbaN (125 aa).

The Cytoplasmic segment spans residues 1-6; the sequence is MQRIIL. The helical transmembrane segment at 7–26 threads the bilayer; the sequence is IIIGWLAVVLGTLGVVLPVL. Over 27 to 45 the chain is Periplasmic; it reads PTTPFILLAAWCFARSSPR. A helical transmembrane segment spans residues 46-63; it reads FHAWLLYRSWFGSYLRFW. At 64-74 the chain is on the cytoplasmic side; it reads QKHHAMPRGVK. A helical transmembrane segment spans residues 75-92; the sequence is PRAILLILLTFAISLWFV. Topologically, residues 93-95 are periplasmic; the sequence is QMP. Residues 96–118 traverse the membrane as a helical segment; it reads WVRIMLLVILACLLFYMWRIPVI. The Cytoplasmic portion of the chain corresponds to 119–125; sequence DEKQEKH.

The protein localises to the cell inner membrane. This Escherichia coli O157:H7 protein is Inner membrane protein YbaN (ybaN).